We begin with the raw amino-acid sequence, 327 residues long: Methionyl-tRNA formyltransferase (327 aa).

121–124 (SLLP) contacts (6S)-5,6,7,8-tetrahydrofolate.

This sequence belongs to the Fmt family.

The catalysed reaction is L-methionyl-tRNA(fMet) + (6R)-10-formyltetrahydrofolate = N-formyl-L-methionyl-tRNA(fMet) + (6S)-5,6,7,8-tetrahydrofolate + H(+). Its function is as follows. Attaches a formyl group to the free amino group of methionyl-tRNA(fMet). The formyl group appears to play a dual role in the initiator identity of N-formylmethionyl-tRNA by promoting its recognition by IF2 and preventing the misappropriation of this tRNA by the elongation apparatus. The protein is Methionyl-tRNA formyltransferase of Burkholderia pseudomallei (strain K96243).